Consider the following 610-residue polypeptide: Serine/threonine-protein kinase RCK2 (610 aa).

Disordered stretches follow at residues 1–55 and 99–127; these read MLKI…QDKN and TSVP…SLSE. A compositionally biased stretch (basic and acidic residues) spans 11-24; the sequence is KKPDQADLSQESKK. Polar residues predominate over residues 31–55; it reads RSSGTNNKDVSQITSSPKKSFQDKN. Phosphoserine is present on residues Ser-46 and Ser-50. Residues 163 to 478 enclose the Protein kinase domain; that stretch reads YKLINKIGEG…IDQFLDDPWL (316 aa). 169–177 serves as a coordination point for ATP; it reads IGEGAFSKV. At Ser-187 the chain carries Phosphoserine. Lys-201 is an ATP binding site. The active-site Proton acceptor is the Asp-313. The residue at position 350 (Thr-350) is a Phosphothreonine. The tract at residues 493–506 is calmodulin-binding; it reads KKAGTSERRHPHKK. Position 520 is a phosphoserine (Ser-520). The disordered stretch occupies residues 541–564; it reads EDRMGTRGGLGSLAEDEELEDSYS.

The protein belongs to the protein kinase superfamily. CAMK Ser/Thr protein kinase family. CaMK subfamily. In terms of processing, autophosphorylated. Phosphorylated by HOG1 at Ser-520 after osmotic stress.

It localises to the cytoplasm. It catalyses the reaction L-seryl-[protein] + ATP = O-phospho-L-seryl-[protein] + ADP + H(+). The enzyme catalyses L-threonyl-[protein] + ATP = O-phospho-L-threonyl-[protein] + ADP + H(+). Activated by Ser-520 phosphorylation by HOG1. Its function is as follows. Serine/threonine-protein kinase involved in a signal transduction pathway that is activated by changes in the osmolarity of the extracellular environment. This is Serine/threonine-protein kinase RCK2 (RCK2) from Saccharomyces cerevisiae (strain ATCC 204508 / S288c) (Baker's yeast).